Consider the following 238-residue polypeptide: Probable transcriptional regulatory protein YeeN (238 aa).

It belongs to the TACO1 family. YeeN subfamily.

The protein resides in the cytoplasm. The chain is Probable transcriptional regulatory protein YeeN from Salmonella typhimurium (strain LT2 / SGSC1412 / ATCC 700720).